The chain runs to 117 residues: Synaptobrevin homolog 1 (117 aa).

Positions 1-30 are disordered; sequence MSSSTPFDPYALSEHDEERPQNVQSKSRTA. At 1 to 94 the chain is on the cytoplasmic side; that stretch reads MSSSTPFDPY…MWYKDLKMKM (94 aa). The v-SNARE coiled-coil homology domain occupies 28 to 88; sequence RTAELQAEID…NRVRKAMWYK (61 aa). K63 is covalently cross-linked (Glycyl lysine isopeptide (Lys-Gly) (interchain with G-Cter in ubiquitin)). C95 carries S-palmitoyl cysteine lipidation. The chain crosses the membrane as a helical; Anchor for type IV membrane protein span at residues 95–111; that stretch reads CLALVIIILLVVIIVPI. The Vesicular segment spans residues 112–117; that stretch reads AVHFSR.

Belongs to the synaptobrevin family. Palmitoylated by SWF1.

The protein resides in the endomembrane system. Functionally, SNC1 and SNC2 are vesicle-targeting proteins essential for normal secretory traffic between the Golgi and the plasma membrane. They may also be involved in vesicle fusion. The protein is Synaptobrevin homolog 1 (SNC1) of Saccharomyces cerevisiae (strain ATCC 204508 / S288c) (Baker's yeast).